The following is a 335-amino-acid chain: Mitochondrial carrier protein CoAc2 (335 aa).

The next 6 helical transmembrane spans lie at 12-32 (SGPG…AGGV), 75-95 (FYRG…LHYM), 119-139 (LVAG…LDLV), 187-207 (GMAP…YFYE), 225-242 (LGCG…TYPL), and 280-302 (LFSG…FTVY). Solcar repeat units follow at residues 17-103 (PLAV…YRRW), 113-212 (QGPV…MKSH), and 219-308 (KGII…MKVC).

Belongs to the mitochondrial carrier (TC 2.A.29) family. As to expression, expressed throughout the plant.

Its subcellular location is the mitochondrion inner membrane. Its function is as follows. Required for the accumulation of coenzyme A in the mitochondrial matrix. This Zea mays (Maize) protein is Mitochondrial carrier protein CoAc2.